The following is a 305-amino-acid chain: Dihydroorotate dehydrogenase B (NAD(+)), catalytic subunit (305 aa).

Residues S23 and 47-48 each bind FMN; that span reads KG. Substrate-binding positions include K47 and 71–75; that span reads NAIGL. FMN-binding residues include N101 and N129. Substrate is bound at residue N129. C132 functions as the Nucleophile in the catalytic mechanism. K167 and I193 together coordinate FMN. Residue 194 to 195 participates in substrate binding; it reads NT. FMN contacts are provided by residues G219, 245–246, and 267–268; these read GG and GT.

Belongs to the dihydroorotate dehydrogenase family. Type 1 subfamily. In terms of assembly, heterotetramer of 2 PyrK and 2 PyrD type B subunits. It depends on FMN as a cofactor.

It is found in the cytoplasm. It carries out the reaction (S)-dihydroorotate + NAD(+) = orotate + NADH + H(+). It functions in the pathway pyrimidine metabolism; UMP biosynthesis via de novo pathway; orotate from (S)-dihydroorotate (NAD(+) route): step 1/1. Its function is as follows. Catalyzes the conversion of dihydroorotate to orotate with NAD(+) as electron acceptor. This chain is Dihydroorotate dehydrogenase B (NAD(+)), catalytic subunit (pyrD), found in Geotalea uraniireducens (strain Rf4) (Geobacter uraniireducens).